Here is a 505-residue protein sequence, read N- to C-terminus: Alpha-ketoglutarate-dependent dioxygenase FTO (505 aa).

Thr4 is modified (phosphothreonine). Positions Thr32–Ser327 are fe2OG dioxygenase domain. Residues Arg96 and Tyr108 each contribute to the substrate site. Asn205 is a binding site for 2-oxoglutarate. A loop L1; predicted to block binding of double-stranded DNA or RNA region spans residues Pro213–Gly224. Residue Lys216 is modified to N6-acetyllysine. His231 and Asp233 together coordinate Fe cation. Substrate is bound at residue His231–Glu234. 2-oxoglutarate is bound at residue Tyr295. His307 serves as a coordination point for Fe cation. Residues Arg316–Ser318, Thr320, and Arg322 contribute to the 2-oxoglutarate site.

Belongs to the fto family. In terms of assembly, monomer. May also exist as homodimer. It depends on Fe(2+) as a cofactor.

The protein localises to the nucleus. The protein resides in the nucleus speckle. It is found in the cytoplasm. The enzyme catalyses a 5'-end (N(7)-methyl 5'-triphosphoguanosine)-(N(6),2'-O-dimethyladenosine) in mRNA + 2-oxoglutarate + O2 = a 5'-end (N(7)-methyl 5'-triphosphoguanosine)-(2'-O-methyladenosine) in mRNA + formaldehyde + succinate + CO2. The catalysed reaction is an N(6)-methyladenosine in mRNA + 2-oxoglutarate + O2 = an adenosine in mRNA + formaldehyde + succinate + CO2. It catalyses the reaction N(6)-methyladenosine in U6 snRNA + 2-oxoglutarate + O2 = adenosine in U6 snRNA + formaldehyde + succinate + CO2. It carries out the reaction a 5'-end (N(7)-methyl 5'-triphosphoguanosine)-(N(6),2'-O-dimethyladenosine) in U6 snRNA + 2-oxoglutarate + O2 = a 5'-end (N(7)-methyl 5'-triphosphoguanosine)-(2'-O-methyladenosine) in U6 snRNA + formaldehyde + succinate + CO2. The enzyme catalyses an N(1)-methyladenosine in tRNA + 2-oxoglutarate + O2 = an adenosine in tRNA + formaldehyde + succinate + CO2. Activated by ascorbate. Inhibited by N-oxalylglycine, fumarate and succinate. Functionally, RNA demethylase that mediates oxidative demethylation of different RNA species, such as mRNAs, tRNAs and snRNAs, and acts as a regulator of fat mass, adipogenesis and energy homeostasis. Specifically demethylates N(6)-methyladenosine (m6A) RNA, the most prevalent internal modification of messenger RNA (mRNA) in higher eukaryotes. M6A demethylation by FTO affects mRNA expression and stability. Also able to demethylate m6A in U6 small nuclear RNA (snRNA). Mediates demethylation of N(6),2'-O-dimethyladenosine cap (m6A(m)), by demethylating the N(6)-methyladenosine at the second transcribed position of mRNAs and U6 snRNA. Demethylation of m6A(m) in the 5'-cap by FTO affects mRNA stability by promoting susceptibility to decapping. Also acts as a tRNA demethylase by removing N(1)-methyladenine from various tRNAs. Has no activity towards 1-methylguanine. Has no detectable activity towards double-stranded DNA. Also able to repair alkylated DNA and RNA by oxidative demethylation: demethylates single-stranded RNA containing 3-methyluracil, single-stranded DNA containing 3-methylthymine and has low demethylase activity towards single-stranded DNA containing 1-methyladenine or 3-methylcytosine. Ability to repair alkylated DNA and RNA is however unsure in vivo. Involved in the regulation of fat mass, adipogenesis and body weight, thereby contributing to the regulation of body size and body fat accumulation. Involved in the regulation of thermogenesis and the control of adipocyte differentiation into brown or white fat cells. Regulates activity of the dopaminergic midbrain circuitry via its ability to demethylate m6A in mRNAs. In Pongo abelii (Sumatran orangutan), this protein is Alpha-ketoglutarate-dependent dioxygenase FTO.